The sequence spans 638 residues: Neuroendocrine convertase 2 (638 aa).

The signal sequence occupies residues 1–25; it reads MRGGCISQGKAAAGLLFCVMVFASA. Positions 26-109 are excised as a propeptide; it reads ERPVFTNHFL…QQEGFNRKKR (84 aa). Residues 129–453 form the Peptidase S8 domain; that stretch reads QWYLINTGQA…YGVLDAGAMV (325 aa). Catalysis depends on charge relay system residues aspartate 167 and histidine 208. Intrachain disulfides connect cysteine 225–cysteine 376 and cysteine 317–cysteine 347. Residue asparagine 375 is glycosylated (N-linked (GlcNAc...) asparagine). The Charge relay system role is filled by serine 384. Residues 461-597 enclose the P/Homo B domain; that stretch reads TVPERFHCVG…TLMLHGTQSA (137 aa). Cysteine 468 and cysteine 494 are disulfide-bonded. Asparagine 514 and asparagine 524 each carry an N-linked (GlcNAc...) asparagine glycan.

This sequence belongs to the peptidase S8 family. Furin subfamily.

It localises to the cytoplasmic vesicle. The protein resides in the secretory vesicle. Its subcellular location is the secreted. The catalysed reaction is Release of protein hormones and neuropeptides from their precursors, generally by hydrolysis of -Lys-Arg-|- bonds.. Its function is as follows. Serine endopeptidase which is involved in the processing of hormone and other protein precursors at sites comprised of pairs of basic amino acid residues. Responsible for the release of glucagon from proglucagon in pancreatic A cells. This chain is Neuroendocrine convertase 2 (PCSK2), found in Bos taurus (Bovine).